The chain runs to 465 residues: Cysteine--tRNA ligase (465 aa).

C27 lines the Zn(2+) pocket. The 'HIGH' region motif lies at 29–39 (PTVYDDAHLGH). The Zn(2+) site is built by C207, H237, and E241. Residues 269 to 273 (KMSKS) carry the 'KMSKS' region motif. Position 272 (K272) interacts with ATP.

It belongs to the class-I aminoacyl-tRNA synthetase family. In terms of assembly, monomer. Zn(2+) is required as a cofactor.

The protein resides in the cytoplasm. It carries out the reaction tRNA(Cys) + L-cysteine + ATP = L-cysteinyl-tRNA(Cys) + AMP + diphosphate. In Helicobacter pylori (strain HPAG1), this protein is Cysteine--tRNA ligase.